The sequence spans 105 residues: Nucleoid-associated protein OCAR_7544/OCA5_c05960 (105 aa).

This sequence belongs to the YbaB/EbfC family. In terms of assembly, homodimer.

It is found in the cytoplasm. The protein resides in the nucleoid. In terms of biological role, binds to DNA and alters its conformation. May be involved in regulation of gene expression, nucleoid organization and DNA protection. The sequence is that of Nucleoid-associated protein OCAR_7544/OCA5_c05960 from Afipia carboxidovorans (strain ATCC 49405 / DSM 1227 / KCTC 32145 / OM5) (Oligotropha carboxidovorans).